A 409-amino-acid chain; its full sequence is S-adenosylmethionine synthase (409 aa).

H15 provides a ligand contact to ATP. D17 lines the Mg(2+) pocket. E43 contacts K(+). L-methionine contacts are provided by E56 and Q100. The segment at 100–110 (QSSDIAQGVNE) is flexible loop. ATP-binding positions include 171–173 (DGK), 248–249 (KF), D257, 263–264 (RK), A280, and K284. D257 is an L-methionine binding site. Position 288 (K288) interacts with L-methionine.

Belongs to the AdoMet synthase family. As to quaternary structure, homotetramer; dimer of dimers. Mg(2+) serves as cofactor. K(+) is required as a cofactor.

It is found in the cytoplasm. It carries out the reaction L-methionine + ATP + H2O = S-adenosyl-L-methionine + phosphate + diphosphate. It functions in the pathway amino-acid biosynthesis; S-adenosyl-L-methionine biosynthesis; S-adenosyl-L-methionine from L-methionine: step 1/1. Its function is as follows. Catalyzes the formation of S-adenosylmethionine (AdoMet) from methionine and ATP. The overall synthetic reaction is composed of two sequential steps, AdoMet formation and the subsequent tripolyphosphate hydrolysis which occurs prior to release of AdoMet from the enzyme. The sequence is that of S-adenosylmethionine synthase from Prochlorococcus marinus (strain NATL1A).